The following is a 70-amino-acid chain: Conotoxin Cl9.1 (70 aa).

A signal peptide spans 1 to 20 (MMGKLGVVLFICLVLFPLET). The propeptide occupies 21 to 50 (LQLEGGQQADRHVDQLEGNPNRETRTIEVR). Cystine bridges form between Cys-51-Cys-63, Cys-56-Cys-67, and Cys-61-Cys-70.

It belongs to the conotoxin M superfamily. Expressed by the venom duct.

Its subcellular location is the secreted. The sequence is that of Conotoxin Cl9.1 from Californiconus californicus (California cone).